Consider the following 392-residue polypeptide: Chaperone protein DnaJ (392 aa).

Residues D2–G67 enclose the J domain. The segment at G148 to K226 adopts a CR-type zinc-finger fold. Zn(2+) is bound by residues C161, C164, C178, C181, C200, C203, C214, and C217. 4 CXXCXGXG motif repeats span residues C161 to G168, C178 to G185, C200 to G207, and C214 to G221.

This sequence belongs to the DnaJ family. As to quaternary structure, homodimer. Zn(2+) serves as cofactor.

The protein resides in the cytoplasm. Its function is as follows. Participates actively in the response to hyperosmotic and heat shock by preventing the aggregation of stress-denatured proteins and by disaggregating proteins, also in an autonomous, DnaK-independent fashion. Unfolded proteins bind initially to DnaJ; upon interaction with the DnaJ-bound protein, DnaK hydrolyzes its bound ATP, resulting in the formation of a stable complex. GrpE releases ADP from DnaK; ATP binding to DnaK triggers the release of the substrate protein, thus completing the reaction cycle. Several rounds of ATP-dependent interactions between DnaJ, DnaK and GrpE are required for fully efficient folding. Also involved, together with DnaK and GrpE, in the DNA replication of plasmids through activation of initiation proteins. This is Chaperone protein DnaJ from Chlamydia pneumoniae (Chlamydophila pneumoniae).